An 80-amino-acid polypeptide reads, in one-letter code: Cortexin-3 (80 aa).

The chain crosses the membrane as a helical span at residues 28 to 48 (TTFVFVILLFIFLGILIVRCF).

The protein belongs to the cortexin family.

It is found in the membrane. The sequence is that of Cortexin-3 (Ctxn3) from Mus musculus (Mouse).